The primary structure comprises 512 residues: NADH-quinone oxidoreductase subunit N (512 aa).

14 helical membrane-spanning segments follow: residues 32–52, 57–77, 97–117, 126–146, 151–171, 186–206, 231–251, 264–284, 296–316, 324–344, 348–368, 392–412, 431–451, and 473–493; these read VLPA…SVLF, FIIV…AVFY, VLSF…AAIV, IEFP…TLMT, FILV…LIGM, FLLG…LFGG, IGLV…PYHA, VTGY…LILY, WAWL…LLAL, MLAY…SAGI, VLFY…ILAY, AIAI…GGFW, ILLI…LRIG, and VGVT…WFLL.

The protein belongs to the complex I subunit 2 family. In terms of assembly, NDH-1 is composed of 14 different subunits. Subunits NuoA, H, J, K, L, M, N constitute the membrane sector of the complex.

It localises to the cell inner membrane. It carries out the reaction a quinone + NADH + 5 H(+)(in) = a quinol + NAD(+) + 4 H(+)(out). Its function is as follows. NDH-1 shuttles electrons from NADH, via FMN and iron-sulfur (Fe-S) centers, to quinones in the respiratory chain. The immediate electron acceptor for the enzyme in this species is believed to be ubiquinone. Couples the redox reaction to proton translocation (for every two electrons transferred, four hydrogen ions are translocated across the cytoplasmic membrane), and thus conserves the redox energy in a proton gradient. This chain is NADH-quinone oxidoreductase subunit N, found in Leptospira interrogans serogroup Icterohaemorrhagiae serovar Lai (strain 56601).